A 923-amino-acid polypeptide reads, in one-letter code: Inorganic phosphate transporter PHO87 (923 aa).

Positions 1–334 constitute an SPX domain; sequence MRFSHFLKYN…HMNTRQELIE (334 aa). The Extracellular portion of the chain corresponds to 1-461; that stretch reads MRFSHFLKYN…KLFFGKRAMK (461 aa). Disordered regions lie at residues 40-74 and 86-107; these read ETPTGDLNDDADSQTPGPIADIESNIAAGEPSSSK and FGSKTPSGSKRGDSDEKAIDGN. Residues 95–104 are compositionally biased toward basic and acidic residues; that stretch reads KRGDSDEKAI. A Glycyl lysine isopeptide (Lys-Gly) (interchain with G-Cter in ubiquitin) cross-link involves residue Lys102. Asn162, Asn202, and Asn274 each carry an N-linked (GlcNAc...) asparagine glycan. The chain crosses the membrane as a helical span at residues 462 to 482; sequence IGFIIIVTGVLLGVKTFNDPV. Topologically, residues 483-493 are cytoplasmic; that stretch reads EHRCMALVECC. The chain crosses the membrane as a helical span at residues 494-514; sequence AFLWASEAIPLHITGLLVPLL. At 515–537 the chain is on the extracellular side; that stretch reads TVLFRVLKDDDGKVMGAAAASTE. Residues 538 to 558 form a helical membrane-spanning segment; that stretch reads ILGTMWSSTIMILLAGFTLGE. At 559–583 the chain is on the cytoplasmic side; it reads ALSQYNVAKVLASWLLALAGTKPRN. A helical transmembrane segment spans residues 584 to 604; sequence VLLMAMSVVFFLSMWISNVAS. Topologically, residues 605–627 are extracellular; the sequence is PVLTYSLLTPLLDPLDYTSPFAK. A helical membrane pass occupies residues 628-648; the sequence is ALVMGVALSADIGGMASPISS. Residues 649–667 lie on the Cytoplasmic side of the membrane; that stretch reads PQNIISMQYLKPYGIGWGQ. A helical transmembrane segment spans residues 668-688; the sequence is FFAVALPTGILSMLCSWALMI. Over 689 to 707 the chain is Extracellular; the sequence is LTFKIGKTKLEKFKPIRTR. Residues 708 to 728 form a helical membrane-spanning segment; that stretch reads FTIKQYFIIIVTIATILLWCV. Residues 729 to 735 are Cytoplasmic-facing; sequence ESQIESA. A helical transmembrane segment spans residues 736-756; sequence FGSSGEIAVIPIVLFFGTGLL. Residues 757–767 are Extracellular-facing; it reads STKDFNTFPWS. A helical transmembrane segment spans residues 768-788; sequence IVVLAMGGIALGKAVSSSGLL. Residues 789-802 are Cytoplasmic-facing; sequence VTIARALQKKIQND. Residues 803 to 823 traverse the membrane as a helical segment; the sequence is GVFAILCIFGILMLVVGTFVS. The Extracellular segment spans residues 824 to 849; that stretch reads HTVSAIIIIPLVQEVGDKLSDPKAAP. Residues 850 to 870 form a helical membrane-spanning segment; it reads ILVFGCALLASCGMGLASSGF. The Cytoplasmic segment spans residues 871–898; that stretch reads PNVTAISMTDKKGNRWLTVGAFISRGVP. A helical transmembrane segment spans residues 899–919; it reads ASLLAFVCVITLGYGISSSVL. Residues 920–923 lie on the Extracellular side of the membrane; it reads KGST.

The protein belongs to the CitM (TC 2.A.11) transporter family.

The protein localises to the membrane. Its function is as follows. Involved in the uptake of inorganic phosphate. The sequence is that of Inorganic phosphate transporter PHO87 (PHO87) from Saccharomyces cerevisiae (strain ATCC 204508 / S288c) (Baker's yeast).